A 633-amino-acid polypeptide reads, in one-letter code: DNA mismatch repair protein MutL (633 aa).

Disordered stretches follow at residues 337–364 and 383–405; these read RPDD…GEFG and VGWS…TRPE. The span at 385-396 shows a compositional bias: gly residues; that stretch reads WSGGSSASGGSS.

The protein belongs to the DNA mismatch repair MutL/HexB family.

This protein is involved in the repair of mismatches in DNA. It is required for dam-dependent methyl-directed DNA mismatch repair. May act as a 'molecular matchmaker', a protein that promotes the formation of a stable complex between two or more DNA-binding proteins in an ATP-dependent manner without itself being part of a final effector complex. This is DNA mismatch repair protein MutL from Pseudomonas aeruginosa (strain UCBPP-PA14).